A 295-amino-acid polypeptide reads, in one-letter code: 4-diphosphocytidyl-2-C-methyl-D-erythritol kinase (295 aa).

The active site involves Lys-22. Residue 106 to 116 (PAGGGFGGGSS) coordinates ATP. Asp-148 is an active-site residue.

Belongs to the GHMP kinase family. IspE subfamily.

It carries out the reaction 4-CDP-2-C-methyl-D-erythritol + ATP = 4-CDP-2-C-methyl-D-erythritol 2-phosphate + ADP + H(+). Its pathway is isoprenoid biosynthesis; isopentenyl diphosphate biosynthesis via DXP pathway; isopentenyl diphosphate from 1-deoxy-D-xylulose 5-phosphate: step 3/6. In terms of biological role, catalyzes the phosphorylation of the position 2 hydroxy group of 4-diphosphocytidyl-2C-methyl-D-erythritol. This is 4-diphosphocytidyl-2-C-methyl-D-erythritol kinase from Xanthomonas axonopodis pv. citri (strain 306).